Reading from the N-terminus, the 489-residue chain is Transmembrane protein 161A (489 aa).

A signal peptide spans 1-23 (MAVMGIQMVVTLLVASLMQRVSP). Topologically, residues 24 to 98 (HYSFGRWLLC…INTMDALVLR (75 aa)) are extracellular. A glycan (N-linked (GlcNAc...) asparagine) is linked at asparagine 34. The chain crosses the membrane as a helical span at residues 99-119 (YFLEYQWFIDFALYSTIIYLF). Residues 120–134 (TEAYYCVVDAQNEIN) are Cytoplasmic-facing. Residues 135 to 155 (IGVLWCLMSIIFSIKVLFTVM) form a helical membrane-spanning segment. Over 156–166 (KHYFRSEEGGE) the chain is Extracellular. The helical transmembrane segment at 167-187 (RSVCMTFAFFFLLIAMIVTIV) threads the bilayer. Over 188–224 (RDEYLEFGLEPGLASVCHNLENFLAQQGWQWSMPFVK) the chain is Cytoplasmic. The chain crosses the membrane as a helical span at residues 225–245 (LAFKIALVALCAFLGGCLTFP). Residues 246 to 264 (GLRLAQTHLDALKMAADRP) are Extracellular-facing. Residues 265–285 (MLQLLLHMSFLPPVIVVVLWI) form a helical membrane-spanning segment. At 286 to 304 (RPITRDFLLNAPMGKESVE) the chain is on the cytoplasmic side. Residues 305-325 (LMSNSAYNTFRLWIIVLLCLL) traverse the membrane as a helical segment. Residues 326 to 370 (RFCLTRFHLQAYLCLADRWVEQMKREAGRISMLEIQRKISRIFCY) are Extracellular-facing. A helical transmembrane segment spans residues 371-391 (LTVVALQYLAPVILTFHCVFM). The Cytoplasmic portion of the chain corresponds to 392–459 (LKSLGDYSWG…GLFTPLFFRG (68 aa)). The interval 413–432 (VDSSPVQSHSPTSEEEEDTE) is disordered. The chain crosses the membrane as a helical span at residues 460-480 (IFSFLTWWVSVCQIITSLFGL). Over 481–489 (YFHQYLGAS) the chain is Extracellular.

It belongs to the TMEM161 family.

It is found in the membrane. Its function is as follows. May play a role in protection against oxidative stress. The protein is Transmembrane protein 161A (tmem161a) of Xenopus laevis (African clawed frog).